A 315-amino-acid polypeptide reads, in one-letter code: T-box transcription factor tbx-8 (315 aa).

Positions 11 to 195 (EDQDKLWNLF…FNPFAKGFRE (185 aa)) form a DNA-binding region, T-box. Residues 193–203 (FREGSQSDRKR) are compositionally biased toward basic and acidic residues. 2 disordered regions span residues 193–235 (FREG…SVSP) and 293–315 (PPPSLKNVKKEEQEDIEQEINVV). Low complexity predominate over residues 205–225 (SPSADDSTTDESSSQVSSPQP). The segment covering 305 to 315 (QEDIEQEINVV) has biased composition (acidic residues).

It localises to the nucleus. Functionally, transcription factor. Involved in the control of early morphogenesis of the intestine, hypodermis and body-wall muscle. Involved in regulating expression of vab-7. Appears to have partially redundant function to tbx-9. This is T-box transcription factor tbx-8 (tbx-8) from Caenorhabditis elegans.